Consider the following 630-residue polypeptide: Mesothelin (630 aa).

A signal peptide spans 1–36 (MALPTARPLLGSCGTPALGSLLFLLFSLGWVQPSRT). Asn57 is a glycosylation site (N-linked (GlcNAc...) asparagine). Ser200 carries the phosphoserine; by FAM20C modification. A required for megakaryocyte-potentiating factor activity region spans residues 262-286 (SIPQGIVAAWRQRSSRDPSWRQPER). Cys302 and Cys326 are joined by a disulfide. N-linked (GlcNAc...) asparagine glycans are attached at residues Asn388, Asn496, and Asn523. Ser606 is lipidated: GPI-anchor amidated serine. A propeptide spans 607–630 (GTPCLLGPGPVLTVLALLLASTLA) (removed in mature form).

This sequence belongs to the mesothelin family. As to quaternary structure, interacts with MUC16. Post-translationally, both MPF and the cleaved form of mesothelin are N-glycosylated. Proteolytically cleaved by a furin-like convertase to generate megakaryocyte-potentiating factor (MPF), and the cleaved form of mesothelin. As to expression, expressed in lung. Expressed at low levels in heart, placenta and kidney. Expressed in mesothelial cells. Highly expressed in mesotheliomas, ovarian cancers, and some squamous cell carcinomas (at protein level).

It is found in the cell membrane. It localises to the golgi apparatus. Its subcellular location is the secreted. Membrane-anchored forms may play a role in cellular adhesion. In terms of biological role, megakaryocyte-potentiating factor (MPF) potentiates megakaryocyte colony formation in vitro. In Homo sapiens (Human), this protein is Mesothelin (MSLN).